Reading from the N-terminus, the 562-residue chain is Urocanate hydratase (562 aa).

NAD(+)-binding positions include 52-53 (GG), Gln130, 176-178 (GMG), Glu196, Arg201, 242-243 (NA), 263-267 (QTSAH), 273-274 (YL), and Tyr322. Cys410 is a catalytic residue. Gly492 serves as a coordination point for NAD(+).

This sequence belongs to the urocanase family. NAD(+) serves as cofactor.

The protein localises to the cytoplasm. It carries out the reaction 4-imidazolone-5-propanoate = trans-urocanate + H2O. The protein operates within amino-acid degradation; L-histidine degradation into L-glutamate; N-formimidoyl-L-glutamate from L-histidine: step 2/3. Functionally, catalyzes the conversion of urocanate to 4-imidazolone-5-propionate. In Shewanella pealeana (strain ATCC 700345 / ANG-SQ1), this protein is Urocanate hydratase.